The primary structure comprises 99 residues: DNA-directed RNA polymerase subunit omega (99 aa).

A disordered region spans residues 55–99; sequence EAGTVISDPNPEEKRERLRIEREERKRQREQEQKELENRLRDEKN. Basic and acidic residues predominate over residues 65–99; it reads PEEKRERLRIEREERKRQREQEQKELENRLRDEKN.

It belongs to the RNA polymerase subunit omega family. As to quaternary structure, the RNAP catalytic core consists of 2 alpha, 1 beta, 1 beta' and 1 omega subunit. When a sigma factor is associated with the core the holoenzyme is formed, which can initiate transcription.

The catalysed reaction is RNA(n) + a ribonucleoside 5'-triphosphate = RNA(n+1) + diphosphate. Promotes RNA polymerase assembly. Latches the N- and C-terminal regions of the beta' subunit thereby facilitating its interaction with the beta and alpha subunits. The protein is DNA-directed RNA polymerase subunit omega of Enterococcus faecalis (strain ATCC 700802 / V583).